We begin with the raw amino-acid sequence, 339 residues long: MSDNGQNSASPHIPVMLADVLDVLKPRDGGVYVDGTFGAGGYTRAILGSADCAVLAIDRDPTAILRGRALATEFAGRLTLIEGRFGDMKRLVRELGHGTVDGVVLDIGVSSMQLDQAERGFSFQQDGPLDMRMGGEGPSAADVVNHFDEADLARIIAVYGEEKRARAVARAIVAARQTAELHRTLELADLVASVIHRKPQDRIHPATRTFQALRIFVNDELGELARGLSGAEDLLHEGGRLAVVAFHSLEDRIVKRFLTARTGRAGRANRYMPERDEVAPSFREIAHKAMKASEEEVEINVRARSAKLRAAERTAAPALPLDLAALGFRAVPTLDGSLA.

S-adenosyl-L-methionine is bound by residues 40–42 (GGY), Asp-58, Phe-85, Asp-106, and Gln-113.

The protein belongs to the methyltransferase superfamily. RsmH family.

It is found in the cytoplasm. The enzyme catalyses cytidine(1402) in 16S rRNA + S-adenosyl-L-methionine = N(4)-methylcytidine(1402) in 16S rRNA + S-adenosyl-L-homocysteine + H(+). Functionally, specifically methylates the N4 position of cytidine in position 1402 (C1402) of 16S rRNA. The polypeptide is Ribosomal RNA small subunit methyltransferase H (Parvibaculum lavamentivorans (strain DS-1 / DSM 13023 / NCIMB 13966)).